The following is a 382-amino-acid chain: MTKFLPIRKTHPILKIINGSLIDLPSPSNISMWWNFGSLLALCLMIQILTGLFLTMYYTANIELAFFSVNYICRNVNYGWLIRTIHANGASFFFICIYLHIGRGIYYESFNLKYTWFIGVIILFMLMATAFMGYVLPWGQMSFWGATVITNLLSAIPYLGTMLVNWIWGGFAVDNATLTRFYTFHFLLPFIILMLTMIHLLFLHQTGSNNPLGLNSNMDKIPFHPYFTYKDLIGFLILMMLLLMLTLSNPYLLGDPDNFIPANPLVTPIHIQPEWYFLFAYAILRSIPNKLGGVIALVMSILILIILPLTFLKKIQGLQFYPINQFMFWIFVMMVILLTWIGARPVEAPYIITGQLLTILYFLYFILNPLISIYWDKLLFNK.

Helical transmembrane passes span 36–56 (FGSL…FLTM), 80–101 (WLIR…YLHI), 116–136 (WFIG…GYVL), and 181–201 (FYTF…IHLL). Heme b is bound by residues H86 and H100. H185 and H199 together coordinate heme b. Residue H204 participates in a ubiquinone binding. The next 4 helical transmembrane spans lie at 229-249 (YKDL…TLSN), 291-311 (LGGV…PLTF), 323-343 (INQF…WIGA), and 350-370 (YIIT…LNPL).

Belongs to the cytochrome b family. The main subunits of complex b-c1 are: cytochrome b, cytochrome c1 and the Rieske protein. The cofactor is heme b.

Its subcellular location is the mitochondrion inner membrane. Component of the ubiquinol-cytochrome c reductase complex (complex III or cytochrome b-c1 complex) that is part of the mitochondrial respiratory chain. The b-c1 complex mediates electron transfer from ubiquinol to cytochrome c. Contributes to the generation of a proton gradient across the mitochondrial membrane that is then used for ATP synthesis. The protein is Cytochrome b (MT-CYB) of Samia ricini (Indian eri silkmoth).